The primary structure comprises 326 residues: Cobalamin biosynthesis protein CobD (326 aa).

4 helical membrane-spanning segments follow: residues 58-78 (MRGVATILILLAASILLGVVL), 81-101 (LFDVLGAVGFILEAITVAVFL), 157-177 (FSDGVVAPALWYAVAGLPGLL), and 304-324 (VFYRACTTLAAASAVLVLPFL).

Belongs to the CobD/CbiB family.

It is found in the cell membrane. It participates in cofactor biosynthesis; adenosylcobalamin biosynthesis. In terms of biological role, converts cobyric acid to cobinamide by the addition of aminopropanol on the F carboxylic group. The protein is Cobalamin biosynthesis protein CobD of Sinorhizobium fredii (strain NBRC 101917 / NGR234).